Consider the following 403-residue polypeptide: Synaptotagmin-7 (403 aa).

Over 1 to 16 the chain is Vesicular; that stretch reads MYRDPEAASPGAPTRD. The helical transmembrane segment at 17–37 threads the bilayer; it reads VLLVSAIITVSLSVTIVLCGL. Over 38 to 403 the chain is Cytoplasmic; the sequence is CHWCQRKLGK…PVAQWHQLKA (366 aa). Residue Ser-52 is modified to Phosphoserine. The segment at 53-103 is disordered; it reads LETVGTPDSGRGRGEKKAIKLPAGGKAVNTAPVPGQTPHDESDRRTETRSS. Position 58 is a phosphothreonine (Thr-58). A Phosphoserine modification is found at Ser-61. Residues 90–100 are compositionally biased toward basic and acidic residues; sequence PHDESDRRTET. A phosphoserine mark is found at Ser-119 and Ser-122. C2 domains are found at residues 135 to 255 and 266 to 399; these read NLGR…TFWK and SRGE…AQWH. Residue Asp-166 coordinates Ca(2+). Gly-169 and Ser-171 each carry asymmetric dimethylarginine. 11 residues coordinate Ca(2+): Asp-172, Asp-225, Asp-227, Ser-230, Asp-233, Asp-297, Asp-303, Asp-357, Asp-359, Ser-362, and Asp-365.

It belongs to the synaptotagmin family. In terms of assembly, homodimer. Can also form heterodimers with SYT6, SYT9 and SYT10. Interacts with calmodulin (CALM1, CALM2 or CALM3). Interacts with CD63; required for localization to lysosomes. Interacts with APP. It depends on Ca(2+) as a cofactor. In terms of processing, palmitoylated at its vesicular N-terminus; palmitoylation is required for localization to lysosome and phagocytosis in macrophages. As to expression, widely expressed. Expressed in insulin-secreting cells. Present in glucagon-secreting cells (at protein level).

It localises to the cell membrane. Its subcellular location is the presynaptic cell membrane. The protein resides in the cytoplasmic vesicle. It is found in the secretory vesicle. The protein localises to the synaptic vesicle membrane. It localises to the lysosome membrane. Its subcellular location is the phagosome membrane. The protein resides in the peroxisome membrane. It is found in the secretory vesicle membrane. In terms of biological role, ca(2+) sensor involved in Ca(2+)-dependent exocytosis of secretory and synaptic vesicles through Ca(2+) and phospholipid binding to the C2 domain. Ca(2+) induces binding of the C2-domains to phospholipid membranes and to assembled SNARE-complexes; both actions contribute to triggering exocytosis. SYT7 binds Ca(2+) with high affinity and slow kinetics compared to other synaptotagmins. Involved in Ca(2+)-triggered lysosomal exocytosis, a major component of the plasma membrane repair. Ca(2+)-regulated delivery of lysosomal membranes to the cell surface is also involved in the phagocytic uptake of particles by macrophages. Ca(2+)-triggered lysosomal exocytosis also plays a role in bone remodeling by regulating secretory pathways in osteoclasts and osteoblasts. Involved in cholesterol transport from lysosome to peroxisome by promoting membrane contacts between lysosomes and peroxisomes: probably acts by promoting vesicle fusion by binding phosphatidylinositol-4,5-bisphosphate on peroxisomal membranes. Acts as a key mediator of synaptic facilitation, a process also named short-term synaptic potentiation: synaptic facilitation takes place at synapses with a low initial release probability and is caused by influx of Ca(2+) into the axon terminal after spike generation, increasing the release probability of neurotransmitters. Probably mediates synaptic facilitation by directly increasing the probability of release. May also contribute to synaptic facilitation by regulating synaptic vesicle replenishment, a process required to ensure that synaptic vesicles are ready for the arrival of the next action potential: SYT7 is required for synaptic vesicle replenishment by acting as a sensor for Ca(2+) and by forming a complex with calmodulin. Also acts as a regulator of Ca(2+)-dependent insulin and glucagon secretion in beta-cells. Triggers exocytosis by promoting fusion pore opening and fusion pore expansion in chromaffin cells. Also regulates the secretion of some non-synaptic secretory granules of specialized cells. The protein is Synaptotagmin-7 of Mus musculus (Mouse).